The primary structure comprises 638 residues: Zinc finger protein 143 (638 aa).

Residue Met-1 is modified to N-acetylmethionine. Residue Lys-213 forms a Glycyl lysine isopeptide (Lys-Gly) (interchain with G-Cter in SUMO2) linkage. 4 C2H2-type zinc fingers span residues 237–261, 267–291, 297–321, and 327–351; these read FRCKYDGCGKLYTTAHHLKVHERSH, YQCEHSGCGKAFATGYGLKSHFRTH, YRCSEDNCTKSFKTSGDLQKHIRTH, and FKCPIEGCGRSFTTSNIRKVHIRTH. Thr-352 carries the post-translational modification Phosphothreonine. C2H2-type zinc fingers lie at residues 357–381, 387–411, and 417–440; these read YYCTEPGCGRAFASATNYKNHVRIH, YVCTVPGCDKRFTEYSSLYKHHVVH, and YNCNHCGKTYKQISTLAMHKRTAH. Lys-406 is covalently cross-linked (Glycyl lysine isopeptide (Lys-Gly) (interchain with G-Cter in SUMO2)).

Belongs to the GLI C2H2-type zinc-finger protein family. As to quaternary structure, interacts with CHD8. Forms a complex with HCFC1 and ZNF143.

It is found in the nucleus. Functionally, transcriptional activator. In complex with HCFC1 and ZNF143, regulates the expression of several genes, including AP2S1, ESCO2, OPHN1, RBL1, UBXN8 and ZNF32. Activates the gene for selenocysteine tRNA (tRNAsec). Binds to the SPH motif of small nuclear RNA (snRNA) gene promoters. Participates in efficient U6 RNA polymerase III transcription via its interaction with CHD8. This chain is Zinc finger protein 143 (Znf143), found in Rattus norvegicus (Rat).